A 2448-amino-acid polypeptide reads, in one-letter code: Cysteine repeat modular protein 1 (2448 aa).

A helical membrane pass occupies residues 9–29 (TSTNLLNIFALYFSAICFIYC). Residues Asn-48, Asn-89, Asn-248, Asn-284, Asn-461, Asn-503, Asn-542, Asn-598, and Asn-619 are each glycosylated (N-linked (GlcNAc...) asparagine). 4 FU repeats span residues 431-481 (KNTC…GYYF), 485-530 (FMQC…GFYI), 535-566 (NFKCEKCNASCLSCTGPSFDQCLSCKSGFYLS), and 567-611 (SNTC…GQFA). 10 FU repeats span residues 645 to 694 (NNQC…GYFP), 698 to 727 (TSVCQACQGKCKTCTSSNTCSSCINGYYLQ), 728 to 772 (DSNC…GTFG), 775 to 813 (QNICQTCIDGCQTCYGPTLLECYSCEQGFFFQAFQITNN), 819 to 868 (KGMC…YYLS), 904 to 947 (GRVC…GFPD), 950 to 983 (QNVCVACHPTCVTCQGPLATDCLTCISGYYLNPA), 984 to 1027 (NNIC…RTYP), 1063 to 1109 (QGAC…NQYV), and 1113 to 1144 (QNRCLPCFYSCSSCFGPNSNQCFSCQPNGFYL). N-linked (GlcNAc...) asparagine glycosylation is found at Asn-761 and Asn-812. An N-linked (GlcNAc...) asparagine glycan is attached at Asn-934. Asn-1002 carries N-linked (GlcNAc...) asparagine glycosylation. A glycan (N-linked (GlcNAc...) asparagine) is linked at Asn-1146. Residues 1147 to 1193 (QTQCSICDISCLQCSGPGFDSCIQCAQGYYKLGDSVCVQSCPDGFFL) form an FU 15 repeat. N-linked (GlcNAc...) asparagine glycosylation occurs at Asn-1194. FU repeat units follow at residues 1197–1232 (NNQCQSCNQVCFNCNGPQNSDCTSCAAGYYQSISNQ), 1234–1279 (GIIC…GYRS), 1281–1332 (KGVC…GTFQ), 1346–1394 (SYYC…GFIL), and 1402–1436 (NQYCKVCKINCVSCIQQFFYYQENCYSSCPVGTVQ). Asn-1296, Asn-1328, and Asn-1365 each carry an N-linked (GlcNAc...) asparagine glycan. Asn-1506, Asn-1601, Asn-1628, and Asn-1670 each carry an N-linked (GlcNAc...) asparagine glycan. The EGF-like domain maps to 1739-1773 (SDISCSLNLCMNSGKCVPNSIFCSCPSAFTGPKCQ). Disulfide bonds link Cys-1743–Cys-1754, Cys-1748–Cys-1761, and Cys-1763–Cys-1772. Residues Asn-1800, Asn-1849, Asn-1877, Asn-1942, Asn-2117, Asn-2155, and Asn-2179 are each glycosylated (N-linked (GlcNAc...) asparagine). 2 helical membrane-spanning segments follow: residues 2201 to 2221 (LYIMIIISLGIGAAFLGYSAI) and 2238 to 2258 (IYFLYYFPIISFLVGPTNQFV). The N-linked (GlcNAc...) asparagine glycan is linked to Asn-2260. 4 helical membrane passes run 2267–2287 (SLTIIASHFAFSSIYVQILPF), 2296–2316 (ILTSIITVSSTSVCIYWTIGV), 2352–2372 (MIGLVLAVLALISISVFIGLC), and 2386–2406 (AVFLIDLIADAIVVFILIIVG).

The protein resides in the membrane. Functionally, required for mucocyst secretion. This Tetrahymena thermophila (strain SB210) protein is Cysteine repeat modular protein 1.